We begin with the raw amino-acid sequence, 616 residues long: Dihydroxy-acid dehydratase (616 aa).

Mg(2+) is bound at residue Asp-81. A [2Fe-2S] cluster-binding site is contributed by Cys-122. 2 residues coordinate Mg(2+): Asp-123 and Lys-124. An N6-carboxylysine modification is found at Lys-124. Position 195 (Cys-195) interacts with [2Fe-2S] cluster. A Mg(2+)-binding site is contributed by Glu-491. Ser-517 serves as the catalytic Proton acceptor.

Belongs to the IlvD/Edd family. In terms of assembly, homodimer. [2Fe-2S] cluster is required as a cofactor. Requires Mg(2+) as cofactor.

It carries out the reaction (2R)-2,3-dihydroxy-3-methylbutanoate = 3-methyl-2-oxobutanoate + H2O. The enzyme catalyses (2R,3R)-2,3-dihydroxy-3-methylpentanoate = (S)-3-methyl-2-oxopentanoate + H2O. Its pathway is amino-acid biosynthesis; L-isoleucine biosynthesis; L-isoleucine from 2-oxobutanoate: step 3/4. It participates in amino-acid biosynthesis; L-valine biosynthesis; L-valine from pyruvate: step 3/4. Functions in the biosynthesis of branched-chain amino acids. Catalyzes the dehydration of (2R,3R)-2,3-dihydroxy-3-methylpentanoate (2,3-dihydroxy-3-methylvalerate) into 2-oxo-3-methylpentanoate (2-oxo-3-methylvalerate) and of (2R)-2,3-dihydroxy-3-methylbutanoate (2,3-dihydroxyisovalerate) into 2-oxo-3-methylbutanoate (2-oxoisovalerate), the penultimate precursor to L-isoleucine and L-valine, respectively. The sequence is that of Dihydroxy-acid dehydratase from Yersinia pseudotuberculosis serotype I (strain IP32953).